The sequence spans 167 residues: MDLRNFGLSNFGLEPQLLSTIQDMLDFADDHDRAGRAPPEQPIRAYVRDAKAMAATPADVKEYPNSYVFIADMPGVKAAEIKVQVEDDNVLVVSGERTEREKDEKDGVKYLRMERRVGKFMRKFVLPENANVEAINAVYQDGVLQVTVEKLPPPEPKKPKTVEVKVA.

Residues 49-167 form the sHSP domain; that stretch reads DAKAMAATPA…KPKTVEVKVA (119 aa).

The protein belongs to the small heat shock protein (HSP20) family.

The protein localises to the cytoplasm. This chain is 18.8 kDa class II heat shock protein (SHSP-2), found in Ipomoea nil (Japanese morning glory).